Here is a 256-residue protein sequence, read N- to C-terminus: ATP synthase peripheral stalk subunit b, mitochondrial (256 aa).

The transit peptide at 1–42 (MLSRVVLSAAATAAPSLKNAAFLGPGVLQATRTFHTGQPHLV) directs the protein to the mitochondrion. Residue Lys-131 is modified to N6-succinyllysine. Lys-139, Lys-154, Lys-162, Lys-221, Lys-233, and Lys-244 each carry N6-acetyllysine.

This sequence belongs to the eukaryotic ATPase B chain family. In terms of assembly, component of the ATP synthase complex composed at least of ATP5F1A/subunit alpha, ATP5F1B/subunit beta, ATP5MC1/subunit c (homooctomer), MT-ATP6/subunit a, MT-ATP8/subunit 8, ATP5ME/subunit e, ATP5MF/subunit f, ATP5MG/subunit g, ATP5MK/subunit k, ATP5MJ/subunit j, ATP5F1C/subunit gamma, ATP5F1D/subunit delta, ATP5F1E/subunit epsilon, ATP5PF/subunit F6, ATP5PB/subunit b, ATP5PD/subunit d, ATP5PO/subunit OSCP. ATP synthase complex consists of a soluble F(1) head domain (subunits alpha(3) and beta(3)) - the catalytic core - and a membrane F(0) domain - the membrane proton channel (subunits c, a, 8, e, f, g, k and j). These two domains are linked by a central stalk (subunits gamma, delta, and epsilon) rotating inside the F1 region and a stationary peripheral stalk (subunits F6, b, d, and OSCP).

It localises to the mitochondrion. The protein localises to the mitochondrion inner membrane. In terms of biological role, subunit b, of the mitochondrial membrane ATP synthase complex (F(1)F(0) ATP synthase or Complex V) that produces ATP from ADP in the presence of a proton gradient across the membrane which is generated by electron transport complexes of the respiratory chain. ATP synthase complex consist of a soluble F(1) head domain - the catalytic core - and a membrane F(1) domain - the membrane proton channel. These two domains are linked by a central stalk rotating inside the F(1) region and a stationary peripheral stalk. During catalysis, ATP synthesis in the catalytic domain of F(1) is coupled via a rotary mechanism of the central stalk subunits to proton translocation. In vivo, can only synthesize ATP although its ATP hydrolase activity can be activated artificially in vitro. Part of the complex F(0) domain. Part of the complex F(0) domain and the peripheric stalk, which acts as a stator to hold the catalytic alpha(3)beta(3) subcomplex and subunit a/ATP6 static relative to the rotary elements. In Homo sapiens (Human), this protein is ATP synthase peripheral stalk subunit b, mitochondrial.